A 142-amino-acid chain; its full sequence is Arginine vasopressin-induced protein 1 (142 aa).

Disordered stretches follow at residues 1–28 and 74–142; these read MGTP…KQAS and RLRR…QIRH. The span at 15–28 shows a compositional bias: polar residues; it reads QVSTPQTRGRKQAS. The segment covering 74-88 has biased composition (basic residues); the sequence is RLRRKRPPKQNHCSR. The segment covering 96-119 has biased composition (polar residues); it reads STASDPQASTTDTASSEQSGNSRR.

Its function is as follows. May be involved in MAP kinase activation, epithelial sodium channel (ENaC) down-regulation and cell cycling. The polypeptide is Arginine vasopressin-induced protein 1 (Avpi1) (Mus musculus (Mouse)).